The sequence spans 458 residues: Paired box protein Pax-8 (458 aa).

The segment at residues glycine 18 to lysine 144 is a DNA-binding region (paired). Residues glycine 21–threonine 77 are PAI subdomain. The interval lysine 96 to lysine 144 is RED subdomain. Residues proline 198–serine 217 form a disordered region.

The protein localises to the nucleus. Probable transcription factor. Involved in kidney development, acting synergistically with lhx1/lim-1 to establish the pronephric primordium in late gastrulae/early neurulae. The sequence is that of Paired box protein Pax-8 from Xenopus tropicalis (Western clawed frog).